A 476-amino-acid chain; its full sequence is Protein transport protein Sec61 subunit alpha (476 aa).

The Cytoplasmic segment spans residues 2 to 33 (GIKFLEVIKPFCAVLPEIQKPERKIQFREKVL). A helical transmembrane segment spans residues 34-53 (WTAITLFIFLVCCQIPLFGI). The Lumenal portion of the chain corresponds to 54–76 (MSSDSADPFYWMRVILASNRGTL). Residues 77 to 96 (MELGISPIVTSGLIMQLLAG) traverse the membrane as a helical segment. At 97–117 (AKIIGVGDTPKDRALFNGAQK) the chain is on the cytoplasmic side. The chain crosses the membrane as a helical span at residues 118–138 (LFGMIITIGQAIVYVMTGMYG). At 139-144 (DPSEMG) the chain is on the lumenal side. The helical transmembrane segment at 145 to 165 (AGICLLIIIQLFVAGLIVLLL) threads the bilayer. The Cytoplasmic portion of the chain corresponds to 166–172 (DELLQKG). Residues 173 to 193 (YGLGSGISLFIATNICETIVW) traverse the membrane as a helical segment. The Lumenal portion of the chain corresponds to 194-240 (KAFSPTTVNTGRGTEFEGAIIALFHLLATRTDKVRALREGFYRQNLP). The chain crosses the membrane as a helical span at residues 241 to 261 (NLMNLIATVFVFAVVIYFQGF). Residues 262 to 288 (RVDLPIKSARYRGQYNTYPIKLFYTSN) are Cytoplasmic-facing. A helical membrane pass occupies residues 289-309 (IPIILQSALVSNLYVISQMLS). At 310-354 (TRFSGNFLVNLLGTWSDATSGGPARAYPVAGLCYYLSPPESFGSV) the chain is on the lumenal side. Residues 355 to 375 (LDDPVHAGIYIVFMLGSCAFF) traverse the membrane as a helical segment. Residues 376–420 (SKTWIEVSGSSAKDVAKQLKEQQMVMRGHRETSMVHELNRYIPTA) lie on the Cytoplasmic side of the membrane. A helical membrane pass occupies residues 421–441 (AAFGGLCIGGLSVMADFLGAI). Topologically, residues 442-445 (GSGT) are lumenal. A helical transmembrane segment spans residues 446–462 (GILLAVTIIYQYFEIFV). Residues 463 to 476 (KEQSEVGSMGALLF) lie on the Cytoplasmic side of the membrane.

This sequence belongs to the SecY/SEC61-alpha family. The SEC61 channel-forming translocon complex consists of channel-forming core components SEC61A1, SEC61B and SEC61G and different auxiliary components such as SEC62 and SEC63. The SEC61 channel associates with the multi-pass translocon (MPT) complex.

The protein resides in the endoplasmic reticulum membrane. Functionally, component of SEC61 channel-forming translocon complex that mediates transport of signal peptide-containing precursor polypeptides across the endoplasmic reticulum (ER). Forms a ribosome receptor and a gated pore in the ER membrane, both functions required for cotranslational translocation of nascent polypeptides. May cooperate with auxiliary protein SEC62, SEC63 and HSPA5/BiP to enable post-translational transport of small presecretory proteins. The SEC61 channel is also involved in ER membrane insertion of transmembrane proteins: it mediates membrane insertion of the first few transmembrane segments of proteins, while insertion of subsequent transmembrane regions of multi-pass membrane proteins is mediated by the multi-pass translocon (MPT) complex. This Hemitripterus americanus (Sea raven) protein is Protein transport protein Sec61 subunit alpha (sec61a).